The sequence spans 182 residues: MSKQLNPAVPDQPIVLGKMGSTYGIRGWLRVFSSTENAESIFDYQPWFIQQAGKWQHVELEDWKRHSQDLIIKVKGVDDREAANLLTNCEIIVDSTQLPALEEDDYYWKDLMGCQVVTTTGYELGKIIDMMETGSNDVMLVKANLKDAFGMKERLVPFLHGQVIKKVDLTAQRVEVDWDPGF.

One can recognise a PRC barrel domain in the interval 103–182 (EDDYYWKDLM…RVEVDWDPGF (80 aa)).

The protein belongs to the RimM family. Binds ribosomal protein uS19.

The protein localises to the cytoplasm. An accessory protein needed during the final step in the assembly of 30S ribosomal subunit, possibly for assembly of the head region. Essential for efficient processing of 16S rRNA. May be needed both before and after RbfA during the maturation of 16S rRNA. It has affinity for free ribosomal 30S subunits but not for 70S ribosomes. The protein is Ribosome maturation factor RimM of Yersinia pestis (strain Pestoides F).